The primary structure comprises 89 residues: Small ribosomal subunit protein uS15 (89 aa).

The protein belongs to the universal ribosomal protein uS15 family. As to quaternary structure, part of the 30S ribosomal subunit. Forms a bridge to the 50S subunit in the 70S ribosome, contacting the 23S rRNA.

One of the primary rRNA binding proteins, it binds directly to 16S rRNA where it helps nucleate assembly of the platform of the 30S subunit by binding and bridging several RNA helices of the 16S rRNA. Its function is as follows. Forms an intersubunit bridge (bridge B4) with the 23S rRNA of the 50S subunit in the ribosome. This chain is Small ribosomal subunit protein uS15, found in Dictyoglomus turgidum (strain DSM 6724 / Z-1310).